A 382-amino-acid chain; its full sequence is Galactokinase (382 aa).

Residue 34 to 37 (EHTD) participates in substrate binding. 124–130 (GAGLSSS) is a binding site for ATP. Mg(2+) is bound by residues Ser130 and Glu162. Asp174 (proton acceptor) is an active-site residue. Tyr223 contacts substrate.

The protein belongs to the GHMP kinase family. GalK subfamily.

It localises to the cytoplasm. The enzyme catalyses alpha-D-galactose + ATP = alpha-D-galactose 1-phosphate + ADP + H(+). It participates in carbohydrate metabolism; galactose metabolism. Catalyzes the transfer of the gamma-phosphate of ATP to D-galactose to form alpha-D-galactose-1-phosphate (Gal-1-P). This is Galactokinase from Aeromonas hydrophila subsp. hydrophila (strain ATCC 7966 / DSM 30187 / BCRC 13018 / CCUG 14551 / JCM 1027 / KCTC 2358 / NCIMB 9240 / NCTC 8049).